We begin with the raw amino-acid sequence, 150 residues long: Allograft inflammatory factor 1-like (150 aa).

S2 is subject to N-acetylserine. Phosphoserine is present on S2. In terms of domain architecture, EF-hand 1 spans 47–82; that stretch reads EKLAAFKEKYMEFDLNNEGEIDLMSLKRMMEKLGVP. Residues D60, N62, E64, and E66 each coordinate Ca(2+). Residues 83–117 form the EF-hand 2; degenerate domain; the sequence is KTHLEMKKMISEVTGGVSDTISYRDFVNMMLGKRS. A disordered region spans residues 129 to 150; it reads KANESSPKPAGPPPERDIASLP. S134 carries the phosphoserine modification.

As to quaternary structure, homodimer (Potential). Monomer.

Its subcellular location is the cytoplasm. It is found in the cytoskeleton. The protein resides in the cell projection. The protein localises to the ruffle membrane. In terms of biological role, actin-binding protein that promotes actin bundling. May neither bind calcium nor depend on calcium for function. This Mus musculus (Mouse) protein is Allograft inflammatory factor 1-like (Aif1l).